The following is a 498-amino-acid chain: POTE ankyrin domain family member A (498 aa).

ANK repeat units lie at residues 98–127 (KKRT…QLHV), 131–160 (KKRT…DPNL), 164–193 (YGNT…DIES), 197–226 (GGLT…NLNA), and 230–259 (FGRT…DVFS). The interval 289–410 (NQMPNNSSGN…SNEKNKVKSQ (122 aa)) is disordered. Positions 290–302 (QMPNNSSGNSNPE) are enriched in polar residues. Positions 303–338 (QDLKLTSEEEPQRLKGSENSQHEKVTQEPDINKDCD) are enriched in basic and acidic residues. Positions 348-359 (HGSNNVGLSENL) are enriched in polar residues. The span at 392–406 (EEYHRPEKKSNEKNK) shows a compositional bias: basic and acidic residues. Residues 469–497 (EHLLELKNSHYEQLTVEVEQMENMVHVLQ) adopt a coiled-coil conformation.

Belongs to the POTE family.

This Homo sapiens (Human) protein is POTE ankyrin domain family member A (POTEA).